Consider the following 314-residue polypeptide: tRNA pseudouridine synthase B (314 aa).

Substrate is bound at residue histidine 43. The active-site Nucleophile is the aspartate 48. Substrate-binding residues include tyrosine 76, tyrosine 179, and leucine 200.

The protein belongs to the pseudouridine synthase TruB family. Type 1 subfamily.

It catalyses the reaction uridine(55) in tRNA = pseudouridine(55) in tRNA. Its function is as follows. Responsible for synthesis of pseudouridine from uracil-55 in the psi GC loop of transfer RNAs. This Shigella flexneri protein is tRNA pseudouridine synthase B.